Here is a 324-residue protein sequence, read N- to C-terminus: MMSQQDLPTLFYSGKSNSAVPIISESELQTITAEPWLEISKKGLQLEGLNFDRQGQLFLLDVFEGNIFKINPETKEIKRPFVSHKANPAAIKIHKDGRLFVCYLGDFKSTGGIFAATENGDNIQDIIEDFSTTYCIDDMVFDSKGGFYFTDFRGYSTNPLGGVYYVAPDFRTVTPIIQNISVANGIALSKDEKVLWVTETTANRLHRIALEDDGVTIQPFGATIPYYFTGHEGPDSCCIDSDDNLYVAMYGQGRVLVFNKRGYPIGQILIPGRDEGHMLRSTHPQFIPDTNQLIICSNDIEMGGGSMLYTVNGFAKGHQSFQFQ.

The Ca(2+) site is built by Glu-47, Ser-109, Gly-111, Asp-129, Thr-132, Tyr-134, Asp-137, Asn-184, Asp-235, and Ser-236. Asp-235 acts as the Proton donor in catalysis.

Belongs to the SMP-30/CGR1 family. It depends on Ca(2+) as a cofactor.

It localises to the cytoplasm. Exhibits lactonase activity. Acts in cells with perturbed membrane integrity and is possibly related to the membrane homeostasis. The sequence is that of Lactonase drp35 (drp35) from Staphylococcus aureus (strain MW2).